A 190-amino-acid polypeptide reads, in one-letter code: Major intrinsically disordered NOTCH2-binding receptor 1-like (190 aa).

Ser-79 bears the Phosphoserine mark. Residues Asn-109 and Asn-125 are each glycosylated (N-linked (GlcNAc...) asparagine). Residues 169-189 traverse the membrane as a helical segment; sequence GLILLVVISILVTIVTIITFF.

Belongs to the MINAR family. In terms of assembly, interacts with NOTCH2. As to expression, highly expressed in the auditory hair cells.

Its subcellular location is the lysosome membrane. The protein resides in the endoplasmic reticulum membrane. Its function is as follows. Binds cholesterol and may regulate the distribution and homeostasis of cholesterol in hair cells. May play a role in angiogenesis. The polypeptide is Major intrinsically disordered NOTCH2-binding receptor 1-like (Homo sapiens (Human)).